The following is a 158-amino-acid chain: SsrA-binding protein (158 aa).

This sequence belongs to the SmpB family.

The protein resides in the cytoplasm. Its function is as follows. Required for rescue of stalled ribosomes mediated by trans-translation. Binds to transfer-messenger RNA (tmRNA), required for stable association of tmRNA with ribosomes. tmRNA and SmpB together mimic tRNA shape, replacing the anticodon stem-loop with SmpB. tmRNA is encoded by the ssrA gene; the 2 termini fold to resemble tRNA(Ala) and it encodes a 'tag peptide', a short internal open reading frame. During trans-translation Ala-aminoacylated tmRNA acts like a tRNA, entering the A-site of stalled ribosomes, displacing the stalled mRNA. The ribosome then switches to translate the ORF on the tmRNA; the nascent peptide is terminated with the 'tag peptide' encoded by the tmRNA and targeted for degradation. The ribosome is freed to recommence translation, which seems to be the essential function of trans-translation. The chain is SsrA-binding protein from Caldicellulosiruptor saccharolyticus (strain ATCC 43494 / DSM 8903 / Tp8T 6331).